A 1413-amino-acid chain; its full sequence is ABC-type transporter vrcC (1413 aa).

Residues 108 to 365 enclose the ABC transporter 1 domain; that stretch reads VWFEALALAR…FLDMGFACPE (258 aa). An N-linked (GlcNAc...) asparagine glycan is attached at N289. A helical membrane pass occupies residues 476 to 496; that stretch reads VTISSLIGNVITALVIASIFY. N-linked (GlcNAc...) asparagine glycosylation is present at N501. Helical transmembrane passes span 510–530 and 564–584; these read ALLF…MLTL and VLNA…VLLG. An N-linked (GlcNAc...) asparagine glycan is attached at N675. A helical membrane pass occupies residues 683–703; sequence IGIILAFMVVLGAIYLVATDF. A disordered region spans residues 725-748; it reads SGKPDDFEGGSDRNASQEKSKSDR. N738 carries an N-linked (GlcNAc...) asparagine glycan. A compositionally biased stretch (basic and acidic residues) spans 739–748; the sequence is ASQEKSKSDR. The ABC transporter 2 domain occupies 761 to 1003; it reads FQWQDVCFDI…ILIDYFVRNG (243 aa). 6 helical membrane-spanning segments follow: residues 1105 to 1125, 1142 to 1162, 1191 to 1211, 1230 to 1250, 1266 to 1286, and 1290 to 1310; these read IYIY…GFSL, IFLL…HFVT, LFWN…PIGM, LLIW…IAAL, LCLL…FWIF, and VSPF…DTTV. N1324 carries N-linked (GlcNAc...) asparagine glycosylation. The helical transmembrane segment at 1378-1398 threads the bilayer; the sequence is FGLMWVFIFTNIVAACLLYWW.

This sequence belongs to the ABC transporter superfamily. ABCG family. PDR (TC 3.A.1.205) subfamily.

The protein localises to the cell membrane. ABC-type transporter; part of the gene cluster that mediates the biosynthesis of the sesterterpene variecolin. VrcC is probably involved in the secretion of variecolin. The chain is ABC-type transporter vrcC from Aspergillus aculeatus (strain ATCC 16872 / CBS 172.66 / WB 5094).